The chain runs to 94 residues: NADH dehydrogenase [ubiquinone] iron-sulfur protein 3, mitochondrial (94 aa).

It belongs to the complex I 30 kDa subunit family. Core subunit of respiratory chain NADH dehydrogenase (Complex I) which is composed of 45 different subunits. Interacts with NDUFAF3. Interacts with RAB5IF. Found in subcomplexes containing subunits NDUFS2, MT-ND1 and NDUFA13.

Its subcellular location is the mitochondrion inner membrane. It catalyses the reaction a ubiquinone + NADH + 5 H(+)(in) = a ubiquinol + NAD(+) + 4 H(+)(out). In terms of biological role, core subunit of the mitochondrial membrane respiratory chain NADH dehydrogenase (Complex I) which catalyzes electron transfer from NADH through the respiratory chain, using ubiquinone as an electron acceptor. Essential for the catalytic activity and assembly of complex I. This is NADH dehydrogenase [ubiquinone] iron-sulfur protein 3, mitochondrial from Mesocricetus auratus (Golden hamster).